The sequence spans 343 residues: Methionine import ATP-binding protein MetN 1 (343 aa).

One can recognise an ABC transporter domain in the interval 2 to 241; it reads IKLSNITKVF…PKTPLAQKFI (240 aa). 38–45 contacts ATP; sequence GASGAGKS.

This sequence belongs to the ABC transporter superfamily. Methionine importer (TC 3.A.1.24) family. In terms of assembly, the complex is composed of two ATP-binding proteins (MetN), two transmembrane proteins (MetI) and a solute-binding protein (MetQ).

It is found in the cell inner membrane. The enzyme catalyses L-methionine(out) + ATP + H2O = L-methionine(in) + ADP + phosphate + H(+). It catalyses the reaction D-methionine(out) + ATP + H2O = D-methionine(in) + ADP + phosphate + H(+). Functionally, part of the ABC transporter complex MetNIQ involved in methionine import. Responsible for energy coupling to the transport system. The protein is Methionine import ATP-binding protein MetN 1 of Salmonella typhi.